A 76-amino-acid polypeptide reads, in one-letter code: Conotoxin VnMKLT2-013 (76 aa).

The first 23 residues, 1-23 (MMKLTCVLIIAVLFLTACQLTTA), serve as a signal peptide directing secretion. A propeptide spanning residues 24–42 (ETRDEYRAVRSSDEVQNSR) is cleaved from the precursor. The tract at residues 29-49 (YRAVRSSDEVQNSRSTDDCST) is disordered. 3 cysteine pairs are disulfide-bonded: Cys47/Cys58, Cys52/Cys63, and Cys57/Cys72.

This sequence belongs to the conotoxin O1 superfamily. Expressed by the venom duct.

The protein resides in the secreted. This chain is Conotoxin VnMKLT2-013, found in Conus ventricosus (Mediterranean cone).